We begin with the raw amino-acid sequence, 323 residues long: MANFLFEFEKPLVELENKISDLKKFAEEKNIDVSRELELLSAKAQQLAKEIYQNLTPWQRVLLARHPERPNTRDYINYLCDDFIELKGDRRFGDDPAMIGGIGIIENIPVTIVGNLKGKDTKENIMRNFGMAHPEGYRKAIRLFKQAEKFGRPVLTFIDTPGAFCGIGAEERGQFQAIAEAIATLISLKTPVLAVITGEGGSGGALALAAGDKLLMLENAVFSVIAPESFAAILWKDSSRAQEASELLKLTSEHLLEFGLIDGIIPEPLGGAHRNPAETLKAVKEEVVKNLQILKETPVEELLRRRYQRYRYIGSGIVEGGVS.

The CoA carboxyltransferase C-terminal domain maps to 36-293 (ELELLSAKAQ…KEEVVKNLQI (258 aa)).

It belongs to the AccA family. Acetyl-CoA carboxylase is a heterohexamer composed of biotin carboxyl carrier protein (AccB), biotin carboxylase (AccC) and two subunits each of ACCase subunit alpha (AccA) and ACCase subunit beta (AccD).

The protein resides in the cytoplasm. The catalysed reaction is N(6)-carboxybiotinyl-L-lysyl-[protein] + acetyl-CoA = N(6)-biotinyl-L-lysyl-[protein] + malonyl-CoA. The protein operates within lipid metabolism; malonyl-CoA biosynthesis; malonyl-CoA from acetyl-CoA: step 1/1. Its function is as follows. Component of the acetyl coenzyme A carboxylase (ACC) complex. First, biotin carboxylase catalyzes the carboxylation of biotin on its carrier protein (BCCP) and then the CO(2) group is transferred by the carboxyltransferase to acetyl-CoA to form malonyl-CoA. The sequence is that of Acetyl-coenzyme A carboxylase carboxyl transferase subunit alpha from Carboxydothermus hydrogenoformans (strain ATCC BAA-161 / DSM 6008 / Z-2901).